We begin with the raw amino-acid sequence, 564 residues long: MRSDKIKKGVEQAPARSLLHATGQIKSPGDMDKPFIAICNSYIDIVPGHVHLRELADVAKEAIREAGGIPFEFNTIGVDDGIAMGHIGMRYSLPSREVIADAAETVINAHWFDGVFYIPNCDKITPGMLLASVRTNVPAIFCSGGPMKAGLSAHGKALTLSSVFEAVGAFKDGSMSQEDFLDMEANACPTCGSCAGMFTANSMNCLMEILGMAVPGNGTTLAVSDARRDLIRESAFHLMDLVKKDIRPRDIITKDAIDDAFALDMAMGGSTNTVLHTLALANEAGIEDYDLERINDIAKRVPYLSKIAPSSSYSMHDVHEAGGVSAIVKELVDLGGAIHPDRITVTGKTIRENVADAKINNTDVIHPKENPYSPVGGLSMLFGNIAPKGAAIKVGGVDPSVQVFKGEAICFSSHDEAVEAIDNHTVREGHVVVIRYEGPKGGPGMPEMLAPTSSIVGRGLGKDVALITDGRFSGATRGIAVGHISPEAAAGGPIALVHDGDIITIDLPNRTLNVDVSDEVLEERRKELPKFKAKVKTGYLARYTALVTSAHTGGILQIPEDLID.

Aspartate 80 is a Mg(2+) binding site. [2Fe-2S] cluster is bound at residue cysteine 121. Residues aspartate 122 and lysine 123 each contribute to the Mg(2+) site. At lysine 123 the chain carries N6-carboxylysine. Cysteine 194 is a binding site for [2Fe-2S] cluster. Position 447 (glutamate 447) interacts with Mg(2+). Serine 473 acts as the Proton acceptor in catalysis.

The protein belongs to the IlvD/Edd family. As to quaternary structure, homodimer. [2Fe-2S] cluster is required as a cofactor. The cofactor is Mg(2+).

It catalyses the reaction (2R)-2,3-dihydroxy-3-methylbutanoate = 3-methyl-2-oxobutanoate + H2O. The catalysed reaction is (2R,3R)-2,3-dihydroxy-3-methylpentanoate = (S)-3-methyl-2-oxopentanoate + H2O. The protein operates within amino-acid biosynthesis; L-isoleucine biosynthesis; L-isoleucine from 2-oxobutanoate: step 3/4. Its pathway is amino-acid biosynthesis; L-valine biosynthesis; L-valine from pyruvate: step 3/4. Functionally, functions in the biosynthesis of branched-chain amino acids. Catalyzes the dehydration of (2R,3R)-2,3-dihydroxy-3-methylpentanoate (2,3-dihydroxy-3-methylvalerate) into 2-oxo-3-methylpentanoate (2-oxo-3-methylvalerate) and of (2R)-2,3-dihydroxy-3-methylbutanoate (2,3-dihydroxyisovalerate) into 2-oxo-3-methylbutanoate (2-oxoisovalerate), the penultimate precursor to L-isoleucine and L-valine, respectively. The protein is Dihydroxy-acid dehydratase of Listeria monocytogenes serotype 4b (strain CLIP80459).